We begin with the raw amino-acid sequence, 896 residues long: DNA double-strand break repair Rad50 ATPase (896 aa).

ATP-binding positions include 32–38 and Q137; that span reads NGAGKSS. Coiled-coil stretches lie at residues 200-274, 412-505, 580-611, 636-669, and 702-731; these read RRYQ…KLQE, EEIR…LISM, IGDI…ESEF, IKLA…IQKR, and RSKV…RMKK. The region spanning 411 to 507 is the Zinc-hook domain; that stretch reads YEEIRRDIDE…KKRQLISMES (97 aa). C455 and C458 together coordinate Zn(2+).

The protein belongs to the SMC family. RAD50 subfamily. In terms of assembly, homodimer. Forms a heterotetramer composed of two Mre11 subunits and two Rad50 subunits. Zn(2+) serves as cofactor.

In terms of biological role, part of the Rad50/Mre11 complex, which is involved in the early steps of DNA double-strand break (DSB) repair. The complex may facilitate opening of the processed DNA ends to aid in the recruitment of HerA and NurA. Rad50 controls the balance between DNA end bridging and DNA resection via ATP-dependent structural rearrangements of the Rad50/Mre11 complex. The polypeptide is DNA double-strand break repair Rad50 ATPase (Thermoplasma acidophilum (strain ATCC 25905 / DSM 1728 / JCM 9062 / NBRC 15155 / AMRC-C165)).